A 274-amino-acid chain; its full sequence is Putative phosphoenolpyruvate synthase regulatory protein (274 aa).

155–162 (GVSRSGKT) is an ADP binding site.

This sequence belongs to the pyruvate, phosphate/water dikinase regulatory protein family. PSRP subfamily.

It carries out the reaction [pyruvate, water dikinase] + ADP = [pyruvate, water dikinase]-phosphate + AMP + H(+). The catalysed reaction is [pyruvate, water dikinase]-phosphate + phosphate + H(+) = [pyruvate, water dikinase] + diphosphate. Its function is as follows. Bifunctional serine/threonine kinase and phosphorylase involved in the regulation of the phosphoenolpyruvate synthase (PEPS) by catalyzing its phosphorylation/dephosphorylation. The sequence is that of Putative phosphoenolpyruvate synthase regulatory protein from Laribacter hongkongensis (strain HLHK9).